We begin with the raw amino-acid sequence, 1135 residues long: DNA-directed RNA polymerase I subunit RPA2 (1135 aa).

The interval 1–24 is disordered; the sequence is MDPGSRWRNLPSGPSLKHLTDPSY. Arg180 lines the RNA pocket. Residues 194–208 form a loop B region; the sequence is IRPKWKTRGPGYTQY. Positions 236–247 are loop A; it reads LNFIYRKELFFL. Asp367 is a binding site for RNA. 2 fork loop regions span residues 439 to 453 and 474 to 489; these read LRSK…DSGL and RGAD…VRRL. Residue Asp755 participates in Mg(2+) binding. RNA is bound at residue Lys890. Arg1020 and Arg1036 together coordinate DNA. Ser1051 carries the post-translational modification Phosphoserine. Residues Cys1070, Cys1073, Cys1098, and Cys1101 each coordinate Zn(2+). Residues 1070–1101 form a C4-type zinc finger; that stretch reads CVKCGSLLSPLLEKPPPSWSAMRNRKYNCTLC.

Belongs to the RNA polymerase beta chain family. In terms of assembly, component of the RNA polymerase I (Pol I) complex consisting of 13 subunits: a ten-subunit catalytic core composed of POLR1A/RPA1, POLR1B/RPA2, POLR1C/RPAC1, POLR1D/RPAC2, POLR1H/RPA12, POLR2E/RPABC1, POLR2F/RPABC2, POLR2H/RPABC3, POLR2K/RPABC4 and POLR2L/RPABC5; a mobile stalk subunit POLR1F/RPA43 protruding from the core and additional subunits homologous to general transcription factors POLR1E/RPA49 and POLR1G/RPA34. Part of Pol I pre-initiation complex (PIC), in which Pol I core assembles with RRN3 and promoter-bound UTBF and SL1/TIF-IB complex. Mg(2+) serves as cofactor.

The protein localises to the nucleus. Its subcellular location is the nucleolus. The protein resides in the chromosome. It catalyses the reaction RNA(n) + a ribonucleoside 5'-triphosphate = RNA(n+1) + diphosphate. In terms of biological role, catalytic core component of RNA polymerase I (Pol I), a DNA-dependent RNA polymerase which synthesizes ribosomal RNA precursors using the four ribonucleoside triphosphates as substrates. Transcribes 47S pre-rRNAs from multicopy rRNA gene clusters, giving rise to 5.8S, 18S and 28S ribosomal RNAs. Pol I-mediated transcription cycle proceeds through transcription initiation, transcription elongation and transcription termination stages. During transcription initiation, Pol I pre-initiation complex (PIC) is recruited by the selectivity factor 1 (SL1/TIF-IB) complex bound to the core promoter that precedes an rDNA repeat unit. The PIC assembly bends the promoter favoring the formation of the transcription bubble and promoter escape. Once the polymerase has escaped from the promoter it enters the elongation phase during which RNA is actively polymerized, based on complementarity with the template DNA strand. Highly processive, assembles in structures referred to as 'Miller trees' where many elongating Pol I complexes queue and transcribe the same rDNA coding regions. At terminator sequences downstream of the rDNA gene, PTRF interacts with Pol I and halts Pol I transcription leading to the release of the RNA transcript and polymerase from the DNA. Forms Pol I active center together with the largest subunit POLR1A/RPA1. Appends one nucleotide at a time to the 3' end of the nascent RNA, with POLR1A/RPA1 contributing a Mg(2+)-coordinating DxDGD motif, and POLR1B/RPA2 participating in the coordination of a second Mg(2+) ion and providing lysine residues believed to facilitate Watson-Crick base pairing between the incoming nucleotide and the template base. Typically, Mg(2+) ions direct a 5' nucleoside triphosphate to form a phosphodiester bond with the 3' hydroxyl of the preceding nucleotide of the nascent RNA, with the elimination of pyrophosphate. Has proofreading activity: Pauses and backtracks to allow the cleavage of a missincorporated nucleotide via POLR1H/RPA12. High Pol I processivity is associated with decreased transcription fidelity. The protein is DNA-directed RNA polymerase I subunit RPA2 of Homo sapiens (Human).